A 183-amino-acid chain; its full sequence is Translocon-associated protein subunit beta (183 aa).

The N-terminal stretch at 1 to 17 (MRLLSFVVLALFAVTQA) is a signal peptide. The Lumenal portion of the chain corresponds to 18 to 149 (EEGARLLASK…DRRFSPHFLD (132 aa)). 2 N-linked (GlcNAc...) asparagine glycosylation sites follow: asparagine 88 and asparagine 104. Residues 150–169 (WAAFGVMTLPSIGIPLLLWY) form a helical membrane-spanning segment. The Cytoplasmic segment spans residues 170 to 183 (SSKRKYDTPKTKKN).

It belongs to the TRAP-beta family. Heterotetramer of TRAP-alpha, TRAP-beta, TRAP-delta and TRAP-gamma. Interacts with STING1.

It localises to the endoplasmic reticulum membrane. Functionally, TRAP proteins are part of a complex whose function is to bind calcium to the ER membrane and thereby regulate the retention of ER resident proteins. The chain is Translocon-associated protein subunit beta (SSR2) from Homo sapiens (Human).